The primary structure comprises 360 residues: MLVYLAEYLTQFYSGFNVFSYVTFRAILGLMTALMFSLWWGPKMIARLQLMQIGQVVRNDGPESHFSKRGTPTMGGLLILAGVFISVLLWGDLDSRYVWVVLFVLGSFGLIGFIDDYRKVVRKDTKGLIARWKYLLQSLAALLIAVYLYASAQSPGETQLVVPFFKDVMPQLGGFFIVLVYFTIVGSSNAVNLTDGLDGLAIMPTVMVAAAFALIAYLSGHVQFASYLHLPYLPGAGELVIVCTAIVGAGLGFLWFNTYPAQVFMGDVGSLSLGAALGTIAVLVRQEILLVIMGGVFVMETVSVILQVGSYKLRGQRIFRMAPIHHHYELKGWPEPRVIVRFWIISLFLVLLGLATLKLR.

10 helical membrane passes run 26-46 (AILG…KMIA), 73-93 (TMGG…WGDL), 97-117 (YVWV…IDDY), 132-152 (WKYL…YASA), 168-188 (VMPQ…VGSS), 199-219 (GLAI…AYLS), 236-256 (AGEL…FLWF), 263-283 (VFMG…IAVL), 288-308 (ILLV…ILQV), and 338-358 (VIVR…ATLK).

Belongs to the glycosyltransferase 4 family. MraY subfamily. Mg(2+) serves as cofactor.

The protein resides in the cell inner membrane. The enzyme catalyses UDP-N-acetyl-alpha-D-muramoyl-L-alanyl-gamma-D-glutamyl-meso-2,6-diaminopimeloyl-D-alanyl-D-alanine + di-trans,octa-cis-undecaprenyl phosphate = di-trans,octa-cis-undecaprenyl diphospho-N-acetyl-alpha-D-muramoyl-L-alanyl-D-glutamyl-meso-2,6-diaminopimeloyl-D-alanyl-D-alanine + UMP. It participates in cell wall biogenesis; peptidoglycan biosynthesis. Catalyzes the initial step of the lipid cycle reactions in the biosynthesis of the cell wall peptidoglycan: transfers peptidoglycan precursor phospho-MurNAc-pentapeptide from UDP-MurNAc-pentapeptide onto the lipid carrier undecaprenyl phosphate, yielding undecaprenyl-pyrophosphoryl-MurNAc-pentapeptide, known as lipid I. This is Phospho-N-acetylmuramoyl-pentapeptide-transferase from Shewanella halifaxensis (strain HAW-EB4).